Consider the following 636-residue polypeptide: ATP-dependent zinc metalloprotease FtsH 1 (636 aa).

At 1–18 (MKLSPPKKNLPPQKNNEP) the chain is on the cytoplasmic side. Residues 19–39 (PFPYLRLLVQVGIALFLVWIW) traverse the membrane as a helical segment. Residues 40 to 126 (QESLHKATVS…YGSVKPSLLS (87 aa)) lie on the Periplasmic side of the membrane. A helical membrane pass occupies residues 127–147 (QILFSWVVPILIFFLVWFALA). The Cytoplasmic portion of the chain corresponds to 148–636 (RFMGGGGAGY…KEAPSYSSTL (489 aa)). An ATP-binding site is contributed by 220–227 (GPPGTGKT). H442 serves as a coordination point for Zn(2+). The active site involves E443. Residues H446 and D519 each coordinate Zn(2+).

The protein in the central section; belongs to the AAA ATPase family. This sequence in the C-terminal section; belongs to the peptidase M41 family. As to quaternary structure, homohexamer. The cofactor is Zn(2+).

Its subcellular location is the cell inner membrane. Acts as a processive, ATP-dependent zinc metallopeptidase for both cytoplasmic and membrane proteins. Plays a role in the quality control of integral membrane proteins. This Methylacidiphilum infernorum (isolate V4) (Methylokorus infernorum (strain V4)) protein is ATP-dependent zinc metalloprotease FtsH 1.